The chain runs to 64 residues: Large ribosomal subunit protein bL35 (64 aa).

It belongs to the bacterial ribosomal protein bL35 family.

The protein is Large ribosomal subunit protein bL35 of Shewanella baltica (strain OS223).